The primary structure comprises 110 residues: Nucleoid-associated protein SYO3AOP1_1366 (110 aa).

It belongs to the YbaB/EbfC family. In terms of assembly, homodimer.

The protein localises to the cytoplasm. It is found in the nucleoid. In terms of biological role, binds to DNA and alters its conformation. May be involved in regulation of gene expression, nucleoid organization and DNA protection. The chain is Nucleoid-associated protein SYO3AOP1_1366 from Sulfurihydrogenibium sp. (strain YO3AOP1).